We begin with the raw amino-acid sequence, 111 residues long: Ribonuclease P protein component (111 aa).

The protein belongs to the RnpA family. Consists of a catalytic RNA component (M1 or rnpB) and a protein subunit.

The enzyme catalyses Endonucleolytic cleavage of RNA, removing 5'-extranucleotides from tRNA precursor.. Functionally, RNaseP catalyzes the removal of the 5'-leader sequence from pre-tRNA to produce the mature 5'-terminus. It can also cleave other RNA substrates such as 4.5S RNA. The protein component plays an auxiliary but essential role in vivo by binding to the 5'-leader sequence and broadening the substrate specificity of the ribozyme. This Fusobacterium nucleatum subsp. nucleatum (strain ATCC 25586 / DSM 15643 / BCRC 10681 / CIP 101130 / JCM 8532 / KCTC 2640 / LMG 13131 / VPI 4355) protein is Ribonuclease P protein component.